The chain runs to 459 residues: V-type ATP synthase beta chain (459 aa).

It belongs to the ATPase alpha/beta chains family.

Functionally, produces ATP from ADP in the presence of a proton gradient across the membrane. The V-type beta chain is a regulatory subunit. This chain is V-type ATP synthase beta chain, found in Thermoanaerobacter sp. (strain X514).